A 423-amino-acid polypeptide reads, in one-letter code: Type II methyltransferase M.NlaIV (423 aa).

An SAM-dependent MTase C5-type domain is found at 4–423 (IKFIDLFSGM…AVSERLLHTL (420 aa)). Cys80 is a catalytic residue.

This sequence belongs to the class I-like SAM-binding methyltransferase superfamily. C5-methyltransferase family.

The catalysed reaction is a 2'-deoxycytidine in DNA + S-adenosyl-L-methionine = a 5-methyl-2'-deoxycytidine in DNA + S-adenosyl-L-homocysteine + H(+). A methylase that recognizes the double-stranded sequence 5'-GGNNCC-3', methylates C-? on both strands, and protects the DNA from cleavage by the NlaIV endonuclease. This is Type II methyltransferase M.NlaIV (nlaIVM) from Neisseria lactamica.